The primary structure comprises 155 residues: MMHPVASSNPAFCGPGKPSCLNEDAMRAADQFDIYSSQQSKYSHTVNHKPMVCQRQDPLNETHLQTTSGRSIEIKDELKKKKNLNRSGKRGRPSGTTKSAGYRTSTGRPLGTTKAAGFKTSPGRPLGTTKAAGYKVSPGRPPGKKQQAFRCSSDA.

Residues Met-1–Pro-10 are compositionally biased toward polar residues. The disordered stretch occupies residues Met-1–Cys-20. Ser-37 is subject to Phosphoserine. The disordered stretch occupies residues Ser-40–Ala-155. The segment covering Asp-57–Arg-70 has biased composition (polar residues). Residue Lys-75 forms a Glycyl lysine isopeptide (Lys-Gly) (interchain with G-Cter in SUMO2) linkage. Positions Lys-80 to Arg-92 are enriched in basic residues. Over residues Ser-94–Gly-107 the composition is skewed to polar residues. Ser-121 is modified (phosphoserine).

Belongs to the UPF0461 family.

The chain is UPF0461 protein C5orf24 homolog from Pongo abelii (Sumatran orangutan).